The sequence spans 273 residues: Nucleotide-binding protein TTHA0319 (273 aa).

Position 8–15 (8–15) interacts with ATP; sequence GLSGAGKT. 57 to 60 provides a ligand contact to GTP; that stretch reads DARA.

Belongs to the RapZ-like family.

Displays ATPase and GTPase activities. The sequence is that of Nucleotide-binding protein TTHA0319 from Thermus thermophilus (strain ATCC 27634 / DSM 579 / HB8).